Consider the following 380-residue polypeptide: Anhydro-N-acetylmuramic acid kinase (380 aa).

9–16 (GTSADGVD) provides a ligand contact to ATP.

The protein belongs to the anhydro-N-acetylmuramic acid kinase family.

The catalysed reaction is 1,6-anhydro-N-acetyl-beta-muramate + ATP + H2O = N-acetyl-D-muramate 6-phosphate + ADP + H(+). It participates in amino-sugar metabolism; 1,6-anhydro-N-acetylmuramate degradation. The protein operates within cell wall biogenesis; peptidoglycan recycling. Catalyzes the specific phosphorylation of 1,6-anhydro-N-acetylmuramic acid (anhMurNAc) with the simultaneous cleavage of the 1,6-anhydro ring, generating MurNAc-6-P. Is required for the utilization of anhMurNAc either imported from the medium or derived from its own cell wall murein, and thus plays a role in cell wall recycling. The chain is Anhydro-N-acetylmuramic acid kinase from Synechococcus sp. (strain CC9902).